Reading from the N-terminus, the 126-residue chain is Holo-[acyl-carrier-protein] synthase (126 aa).

Positions 9 and 58 each coordinate Mg(2+).

Belongs to the P-Pant transferase superfamily. AcpS family. Requires Mg(2+) as cofactor.

It localises to the cytoplasm. It catalyses the reaction apo-[ACP] + CoA = holo-[ACP] + adenosine 3',5'-bisphosphate + H(+). Transfers the 4'-phosphopantetheine moiety from coenzyme A to a Ser of acyl-carrier-protein. This is Holo-[acyl-carrier-protein] synthase from Pectobacterium atrosepticum (strain SCRI 1043 / ATCC BAA-672) (Erwinia carotovora subsp. atroseptica).